Consider the following 37-residue polypeptide: Large ribosomal subunit protein bL36c (37 aa).

Component of the chloroplast large ribosomal subunit (LSU). Mature 70S chloroplast ribosomes of higher plants consist of a small (30S) and a large (50S) subunit. The 30S small subunit contains 1 molecule of ribosomal RNA (16S rRNA) and 24 different proteins. The 50S large subunit contains 3 rRNA molecules (23S, 5S and 4.5S rRNA) and 33 different proteins.

It localises to the plastid. Its subcellular location is the chloroplast. Component of the chloroplast ribosome (chloro-ribosome), a dedicated translation machinery responsible for the synthesis of chloroplast genome-encoded proteins, including proteins of the transcription and translation machinery and components of the photosynthetic apparatus. The sequence is that of Large ribosomal subunit protein bL36c (rpl36) from Spinacia oleracea (Spinach).